A 128-amino-acid polypeptide reads, in one-letter code: Small ribosomal subunit protein uS12 (128 aa).

3-methylthioaspartic acid is present on D89. Residues 101-128 are disordered; sequence SLDTSGVADRRQGRSKYGAKRPKGAAAK. Residues 113-128 are compositionally biased toward basic residues; sequence GRSKYGAKRPKGAAAK.

This sequence belongs to the universal ribosomal protein uS12 family. As to quaternary structure, part of the 30S ribosomal subunit. Contacts proteins S8 and S17. May interact with IF1 in the 30S initiation complex.

In terms of biological role, with S4 and S5 plays an important role in translational accuracy. Interacts with and stabilizes bases of the 16S rRNA that are involved in tRNA selection in the A site and with the mRNA backbone. Located at the interface of the 30S and 50S subunits, it traverses the body of the 30S subunit contacting proteins on the other side and probably holding the rRNA structure together. The combined cluster of proteins S8, S12 and S17 appears to hold together the shoulder and platform of the 30S subunit. The polypeptide is Small ribosomal subunit protein uS12 (Prosthecochloris aestuarii (strain DSM 271 / SK 413)).